We begin with the raw amino-acid sequence, 257 residues long: Acetylglutamate kinase (257 aa).

Residues 40–41 (GG), Arg62, and Asn155 contribute to the substrate site.

Belongs to the acetylglutamate kinase family. ArgB subfamily.

It is found in the cytoplasm. The enzyme catalyses N-acetyl-L-glutamate + ATP = N-acetyl-L-glutamyl 5-phosphate + ADP. It functions in the pathway amino-acid biosynthesis; L-arginine biosynthesis; N(2)-acetyl-L-ornithine from L-glutamate: step 2/4. Catalyzes the ATP-dependent phosphorylation of N-acetyl-L-glutamate. In Shouchella clausii (strain KSM-K16) (Alkalihalobacillus clausii), this protein is Acetylglutamate kinase.